Reading from the N-terminus, the 466-residue chain is Glutamate decarboxylase (466 aa).

Lys-277 carries the N6-(pyridoxal phosphate)lysine modification.

Belongs to the group II decarboxylase family. The cofactor is pyridoxal 5'-phosphate.

It carries out the reaction L-glutamate + H(+) = 4-aminobutanoate + CO2. Its function is as follows. Converts internalized glutamate to GABA and increases the internal pH. Involved in glutamate-dependent acid resistance. The sequence is that of Glutamate decarboxylase (gadB) from Lactococcus lactis subsp. cremoris (strain MG1363).